A 1264-amino-acid chain; its full sequence is ATP-dependent helicase/nuclease subunit A (1264 aa).

The UvrD-like helicase ATP-binding domain occupies 12–482 (EQFTDSQWQA…IILAENFRSR (471 aa)). 33–40 (ASAGSGKT) contacts ATP. Residues 520 to 808 (SEAADYSTEL…RVMTIHASKG (289 aa)) form the UvrD-like helicase C-terminal domain.

Belongs to the helicase family. AddA subfamily. As to quaternary structure, heterodimer of AddA and AddB/RexB. It depends on Mg(2+) as a cofactor.

The catalysed reaction is Couples ATP hydrolysis with the unwinding of duplex DNA by translocating in the 3'-5' direction.. The enzyme catalyses ATP + H2O = ADP + phosphate + H(+). Its function is as follows. The heterodimer acts as both an ATP-dependent DNA helicase and an ATP-dependent, dual-direction single-stranded exonuclease. Recognizes the chi site generating a DNA molecule suitable for the initiation of homologous recombination. The AddA nuclease domain is required for chi fragment generation; this subunit has the helicase and 3' -&gt; 5' nuclease activities. The chain is ATP-dependent helicase/nuclease subunit A from Enterococcus faecalis (strain ATCC 700802 / V583).